We begin with the raw amino-acid sequence, 105 residues long: Large ribosomal subunit protein uL24 (105 aa).

This sequence belongs to the universal ribosomal protein uL24 family. In terms of assembly, part of the 50S ribosomal subunit.

In terms of biological role, one of two assembly initiator proteins, it binds directly to the 5'-end of the 23S rRNA, where it nucleates assembly of the 50S subunit. One of the proteins that surrounds the polypeptide exit tunnel on the outside of the subunit. This Pseudothermotoga lettingae (strain ATCC BAA-301 / DSM 14385 / NBRC 107922 / TMO) (Thermotoga lettingae) protein is Large ribosomal subunit protein uL24.